Reading from the N-terminus, the 447-residue chain is Phosphoglucosamine mutase (447 aa).

Catalysis depends on Ser-108, which acts as the Phosphoserine intermediate. 4 residues coordinate Mg(2+): Ser-108, Asp-247, Asp-249, and Asp-251. Ser-108 carries the post-translational modification Phosphoserine.

This sequence belongs to the phosphohexose mutase family. Mg(2+) serves as cofactor. In terms of processing, activated by phosphorylation.

The catalysed reaction is alpha-D-glucosamine 1-phosphate = D-glucosamine 6-phosphate. Its function is as follows. Catalyzes the conversion of glucosamine-6-phosphate to glucosamine-1-phosphate. In Bordetella avium (strain 197N), this protein is Phosphoglucosamine mutase.